Consider the following 283-residue polypeptide: Pantothenate synthetase (283 aa).

Methionine 31–histidine 38 lines the ATP pocket. Histidine 38 functions as the Proton donor in the catalytic mechanism. Glutamine 62 contacts (R)-pantoate. Glutamine 62 contacts beta-alanine. An ATP-binding site is contributed by glycine 148 to aspartate 151. Glutamine 154 lines the (R)-pantoate pocket. ATP is bound by residues valine 177 and lysine 185 to arginine 188.

This sequence belongs to the pantothenate synthetase family. In terms of assembly, homodimer.

It is found in the cytoplasm. The catalysed reaction is (R)-pantoate + beta-alanine + ATP = (R)-pantothenate + AMP + diphosphate + H(+). Its pathway is cofactor biosynthesis; (R)-pantothenate biosynthesis; (R)-pantothenate from (R)-pantoate and beta-alanine: step 1/1. Its function is as follows. Catalyzes the condensation of pantoate with beta-alanine in an ATP-dependent reaction via a pantoyl-adenylate intermediate. This chain is Pantothenate synthetase, found in Staphylococcus aureus (strain Mu3 / ATCC 700698).